The following is a 529-amino-acid chain: Glucose-6-phosphate isomerase (529 aa).

Glu-322 serves as the catalytic Proton donor. Residues His-351 and Lys-455 contribute to the active site.

Belongs to the GPI family.

It is found in the cytoplasm. It catalyses the reaction alpha-D-glucose 6-phosphate = beta-D-fructose 6-phosphate. The protein operates within carbohydrate biosynthesis; gluconeogenesis. Its pathway is carbohydrate degradation; glycolysis; D-glyceraldehyde 3-phosphate and glycerone phosphate from D-glucose: step 2/4. Its function is as follows. Catalyzes the reversible isomerization of glucose-6-phosphate to fructose-6-phosphate. This Acaryochloris marina (strain MBIC 11017) protein is Glucose-6-phosphate isomerase.